A 228-amino-acid polypeptide reads, in one-letter code: Ribonuclease S-1 (228 aa).

The N-terminal stretch at methionine 1–glycine 27 is a signal peptide. Glutamine 36 is a binding site for RNA. Cysteine 42 and cysteine 49 form a disulfide bridge. Histidine 60 is a binding site for RNA. The active-site Proton donor is the histidine 60. A disulfide bridge connects residues cysteine 75 and cysteine 119. Asparagine 87 carries N-linked (GlcNAc...) asparagine glycosylation. Asparagine 98–valine 99 contributes to the RNA binding site. An N-linked (GlcNAc...) asparagine glycan is attached at asparagine 101. RNA contacts are provided by residues phenylalanine 108, lysine 111 to glutamate 112, and lysine 115 to histidine 116. Residue glutamate 112 is part of the active site. Histidine 116 acts as the Proton acceptor in catalysis. 3 N-linked (GlcNAc...) asparagine glycosylation sites follow: asparagine 144, asparagine 157, and asparagine 175. 2 cysteine pairs are disulfide-bonded: cysteine 183–cysteine 222 and cysteine 199–cysteine 210.

It belongs to the RNase T2 family. N-linked core structure at Asn-87 and Asn-101 contains xylose and fucose or consists of disaccharide (GlcNAc-GlcNAc). N-linked core structure at Asn-144 contains xylose.

It carries out the reaction a ribonucleotidyl-ribonucleotide-RNA + H2O = a 3'-end 3'-phospho-ribonucleotide-RNA + a 5'-end dephospho-ribonucleoside-RNA + H(+). Functionally, self-incompatibility (SI) is the inherited ability of a flowering plant to prevent self-fertilization by discriminating between self and non-self pollen during pollination. In many species, self-incompatibility is controlled by the single, multiallelic locus S. This chain is Ribonuclease S-1, found in Pyrus pyrifolia (Chinese pear).